The primary structure comprises 436 residues: MFDSTLNPLWQRYILAVQEEVKPALGCTEPISLALAAAVAAAELEGPVERVEAWVSPNLMKNGLGVTVPGTGMVGLPIAAALGALGGNANAGLEVLKDATAQAIADAKALLAAGKVSVKIQEPCNEILFSRAKVWNGEKWACVTIVGGHTNIVHIETHNGVVFTHQACVAEGEQESPLTVLSRTTLAEILKFVNEVPFAAIRFILDSAKLNCALSQEGLSGKWGLHIGATLEKQCERGLLAKDLSSSIVIRTSAASDARMGGATLPAMSNSGSGNQGITAIMPVVVVAEHFGADDERLARALMLSHLSAIYIHNQLPRLSALCAATTAAMGAAAGMAWLVDGRYETISMAISSMIGDVSGMICDGASNSCAMKVSTSASAAWKAVLMALDDTAVTGNEGIVAHDVEQSIANLCALASHSMQQTDRQIIEIMASKAR.

This sequence belongs to the UPF0597 family.

This Shigella flexneri serotype 5b (strain 8401) protein is UPF0597 protein YhaM.